Consider the following 309-residue polypeptide: E3 ubiquitin-protein ligase SINAT5 (309 aa).

The RING-type zinc-finger motif lies at 46-82 (CPVCTNSMYPPIHQCHNGHTLCSTCKSRVHNRCPTCR). The tract at residues 96-289 (VAESLELPCK…KELKLRVTGR (194 aa)) is SBD. Residues 99–159 (SLELPCKYYN…LVAHLRDDHK (61 aa)) form an SIAH-type zinc finger. Zn(2+) contacts are provided by C104, C111, H123, C127, C134, C141, H153, and H158.

This sequence belongs to the SINA (Seven in absentia) family. Homodimer; homodimerization is essential for its function. Interacts with UBC28 and NAC021/NAC022. Interacts with SINAT6. Interacts with ATG6 and TRAF1A. Interacts with WAV3. Interacts with FREE1. As to expression, expressed at low level in the vascular tissue of mature roots. Expressed in lateral roots and in elongation zone of the main root upon stimulation by auxin. Colocalizes with NAC021/NAC022.

The protein localises to the nucleus. The protein resides in the cytoplasm. It catalyses the reaction S-ubiquitinyl-[E2 ubiquitin-conjugating enzyme]-L-cysteine + [acceptor protein]-L-lysine = [E2 ubiquitin-conjugating enzyme]-L-cysteine + N(6)-ubiquitinyl-[acceptor protein]-L-lysine.. It participates in protein modification; protein ubiquitination. In terms of biological role, E3 ubiquitin-protein ligase that mediates ubiquitination and subsequent proteasomal degradation of target proteins. E3 ubiquitin ligases accept ubiquitin from an E2 ubiquitin-conjugating enzyme in the form of a thioester and then directly transfers the ubiquitin to targeted substrates. Mediates the ubiquitination and proteasomal-dependent degradation of NAC021/NAC022, a transcription activator that functions downstream of the auxin signals, thereby acting as a down-regulator of auxin signals. Involved in the formation of lateral roots. Is antagonist to SINAT1, SINAT2, SINAT3 and SINAT4 by suppressing FREE1 ubiquitination and degradation mediated by SINAT1, SINAT2, SINAT3 and SINAT4, and promoting FREE1 accumulation. In Arabidopsis thaliana (Mouse-ear cress), this protein is E3 ubiquitin-protein ligase SINAT5.